We begin with the raw amino-acid sequence, 446 residues long: Phosphoglucosamine mutase (446 aa).

S103 functions as the Phosphoserine intermediate in the catalytic mechanism. 4 residues coordinate Mg(2+): S103, D242, D244, and D246. Residue S103 is modified to Phosphoserine.

This sequence belongs to the phosphohexose mutase family. Requires Mg(2+) as cofactor. Post-translationally, activated by phosphorylation.

It carries out the reaction alpha-D-glucosamine 1-phosphate = D-glucosamine 6-phosphate. Functionally, catalyzes the conversion of glucosamine-6-phosphate to glucosamine-1-phosphate. This chain is Phosphoglucosamine mutase, found in Vibrio campbellii (strain ATCC BAA-1116).